The chain runs to 144 residues: Putative pre-16S rRNA nuclease (144 aa).

The protein belongs to the YqgF nuclease family.

It localises to the cytoplasm. In terms of biological role, could be a nuclease involved in processing of the 5'-end of pre-16S rRNA. The sequence is that of Putative pre-16S rRNA nuclease from Prochlorococcus marinus (strain NATL1A).